We begin with the raw amino-acid sequence, 172 residues long: Ribosome maturation factor RimP (172 aa).

This sequence belongs to the RimP family.

The protein localises to the cytoplasm. Required for maturation of 30S ribosomal subunits. In Chlorobium phaeovibrioides (strain DSM 265 / 1930) (Prosthecochloris vibrioformis (strain DSM 265)), this protein is Ribosome maturation factor RimP.